A 245-amino-acid polypeptide reads, in one-letter code: Uridylate kinase (245 aa).

15 to 18 contributes to the ATP binding site; that stretch reads KLSG. The tract at residues 23–28 is involved in allosteric activation by GTP; it reads GEEGFG. G57 lines the UMP pocket. The ATP site is built by G58 and R62. UMP is bound by residues D77 and 138-145; that span reads TGNPFCTT. Residues T165, Y171, and D174 each contribute to the ATP site.

The protein belongs to the UMP kinase family. In terms of assembly, homohexamer.

The protein resides in the cytoplasm. The enzyme catalyses UMP + ATP = UDP + ADP. The protein operates within pyrimidine metabolism; CTP biosynthesis via de novo pathway; UDP from UMP (UMPK route): step 1/1. Allosterically activated by GTP. Inhibited by UTP. Catalyzes the reversible phosphorylation of UMP to UDP. This chain is Uridylate kinase, found in Shewanella putrefaciens (strain CN-32 / ATCC BAA-453).